The following is a 335-amino-acid chain: DNA-directed RNA polymerase subunit alpha (335 aa).

The alpha N-terminal domain (alpha-NTD) stretch occupies residues 1–233; the sequence is MTAVNDFLTP…QQIAVFVDLE (233 aa). An alpha C-terminal domain (alpha-CTD) region spans residues 247–335; the sequence is IDPILLRPVD…DDDRLNAKLR (89 aa).

This sequence belongs to the RNA polymerase alpha chain family. As to quaternary structure, homodimer. The RNAP catalytic core consists of 2 alpha, 1 beta, 1 beta' and 1 omega subunit. When a sigma factor is associated with the core the holoenzyme is formed, which can initiate transcription.

The enzyme catalyses RNA(n) + a ribonucleoside 5'-triphosphate = RNA(n+1) + diphosphate. Functionally, DNA-dependent RNA polymerase catalyzes the transcription of DNA into RNA using the four ribonucleoside triphosphates as substrates. This chain is DNA-directed RNA polymerase subunit alpha, found in Alcanivorax borkumensis (strain ATCC 700651 / DSM 11573 / NCIMB 13689 / SK2).